The primary structure comprises 874 residues: MTISHIDPEYQANTIEPSVQQDWENRKVFKVADTVEGKHRYILSMFPYPSGKLHMGHVRNYTIGDVISRFYRLKGETVLQPMGWDAFGLPAENAAIAHKVAPAKWTFENIAYMRDQLKKLGLSVDWDREFATCTPEYYHWEQWLFVQLYKKGLIYRKLSTVNWDPVDQTVLANEQVENGRGWRSGALVEKRDIPMYYFRITDYAQELLDDLDTLQDGWPQQVLTMQRNWIGRSTGMEITFPSANTEIYADGLTVYTTRADTLMGVTYVAVAAEHPLALKAAENNPELAAFIEECRMGSVAEADLATAEKKGMATGLFVKHPVTGEELPVWIANYVLMSYGSGAVMAVPAHDERDFEFANKFNLPIKQVIDAKGADDADYSATEWQEWYGSKEGKLVNSGEFDGLEFQAAFDAFLAKLEPQGLANSKVQFRLRDWGVSRQRYWGCPIPMINCDTCGQVTVPEDQLPVVLPTDVVPDGSGNPLNKMPEFYETKCPCCGGDARRETDTLDTFVESSWYYARYASPDFTGGMVKPEAAKNWLPVNQYIGGVEHAILHLLYARFFHKLMRDEGVVQGNEPFTNLLTQGMVLADTFYREAENGKKTWFNPADIELERDEKGRIISAKYSGDGQEVIIGGQEKMSKSKNNGIDPQAIIDQYGADTARVFMMFAAPPDQSLEWSDAGVEGANRFLKRVWRLVASFLEKGNSATAIDKANLSKDAQDLRRKTHETIQKVSDDIERRHAFNTAIAALMELLNASNKFEAKDDNDVAVEREAITTLLTLLAPFAPHLSQTLLAQFGTDLTEATFPEVDASALTRNTQTIVVQVNGKLRGKLEVSVDISKDELLAQAKALPEVQQFLTGPTKKEIVVPNKLVNLVV.

Positions 47 to 57 (PYPSGKLHMGH) match the 'HIGH' region motif. A 'KMSKS' region motif is present at residues 636–640 (KMSKS). Lys639 is a binding site for ATP.

The protein belongs to the class-I aminoacyl-tRNA synthetase family.

Its subcellular location is the cytoplasm. It catalyses the reaction tRNA(Leu) + L-leucine + ATP = L-leucyl-tRNA(Leu) + AMP + diphosphate. The chain is Leucine--tRNA ligase from Acinetobacter baumannii (strain AB0057).